We begin with the raw amino-acid sequence, 67 residues long: Large ribosomal subunit protein bL35 (67 aa).

Belongs to the bacterial ribosomal protein bL35 family.

The sequence is that of Large ribosomal subunit protein bL35 from Leptospira borgpetersenii serovar Hardjo-bovis (strain JB197).